The primary structure comprises 64 residues: Alpha-conotoxin-like Lp1.7 (64 aa).

Residues 1 to 21 (MGMRMMFTMFLLVVLTTTVVS) form the signal peptide. Positions 22 to 41 (FNSDRESNHENRRTSNQITR) are excised as a propeptide. 2 disulfides stabilise this stretch: Cys-47–Cys-53 and Cys-48–Cys-61. Positions 49 to 51 (DDP) are lacks the Ser-Xaa-Pro motif that is crucial for potent interaction with nAChR.

The protein belongs to the conotoxin A superfamily. Expressed by the venom duct.

It is found in the secreted. In terms of biological role, alpha-conotoxins act on postsynaptic membranes, they bind to the nicotinic acetylcholine receptors (nAChR) and thus inhibit them. Has possibly a distinct nAChR binding mode from other alpha-conotoxins, due to a different three residue motif (lacks the Ser-Xaa-Pro motif). In Conus leopardus (Leopard cone), this protein is Alpha-conotoxin-like Lp1.7.